Here is a 357-residue protein sequence, read N- to C-terminus: 4-hydroxy-2-oxovalerate aldolase (357 aa).

Residues 1 to 21 (MSQEAARDAAAGRPVQIHDPT) are disordered. The 251-residue stretch at 15–265 (VQIHDPTLRD…RTGIDLYRLL (251 aa)) folds into the Pyruvate carboxyltransferase domain. 23 to 24 (RD) contributes to the substrate binding site. Position 24 (Asp24) interacts with Mn(2+). His27 acts as the Proton acceptor in catalysis. Substrate-binding residues include Ser177 and His204. 2 residues coordinate Mn(2+): His204 and His206.

The protein belongs to the 4-hydroxy-2-oxovalerate aldolase family.

The catalysed reaction is (S)-4-hydroxy-2-oxopentanoate = acetaldehyde + pyruvate. Its function is as follows. Involved in the biosynthesis of the peptidyl nucleoside antibiotic nikkomycin. The polypeptide is 4-hydroxy-2-oxovalerate aldolase (Streptomyces tendae).